We begin with the raw amino-acid sequence, 984 residues long: Putative formate dehydrogenase SA2102 (984 aa).

The region spanning 3–79 is the 2Fe-2S ferredoxin-type domain; that stretch reads EHLVVTLDGK…PMTVNTVNND (77 aa). [2Fe-2S] cluster contacts are provided by Cys37, Cys48, Cys51, and Cys63. Residues 79–119 enclose the 4Fe-4S His(Cys)3-ligated-type domain; the sequence is DVKDAQKEALDRILEKHMLYCTVCDYNNGDCEIHNTMDAWG. The [4Fe-4S] cluster site is built by His95, Cys99, Cys102, Cys109, Cys147, Cys150, Cys153, Cys157, Cys190, Cys193, Cys196, Cys200, Cys264, Cys267, Cys271, and Cys299. 4Fe-4S ferredoxin-type domains are found at residues 138–165 and 181–211; these read PFYR…VNET and NDVP…VNME. Residues 252 to 984 form a formate dehydrogenase region; that stretch reads MRKERIKKTK…YVFPGNQVDK (733 aa). Positions 257–313 constitute a 4Fe-4S Mo/W bis-MGD-type domain; sequence IKKTKTVCTYCGVGCSFEVWTKDREILKVQPSHDSPANKIATCVKGKFSWGHINSDQ.

It in the C-terminal section; belongs to the prokaryotic molybdopterin-containing oxidoreductase family. [2Fe-2S] cluster is required as a cofactor. The cofactor is [4Fe-4S] cluster. It depends on Mo-bis(molybdopterin guanine dinucleotide) as a cofactor.

It carries out the reaction formate + NAD(+) = CO2 + NADH. The chain is Putative formate dehydrogenase SA2102 from Staphylococcus aureus (strain N315).